Reading from the N-terminus, the 345-residue chain is MENEEIPEFLSPKEEIVYWRELSKRLKQSYQEARDELIEFQEGSRELEAELETQLVQAEQRNRDLLSDNQRLKCEVESLKEKLEHQYAQSYKQVSLLEDELARARSIKDQLHKYVRELEQANDDLERAKRATIVSLEDFEQRLNQAIERNAFLESELDEKESLLVSVQRLKDEARDLRQELAVRERQTDGTRKSAPSSPTLDCDKTDSAVQASLSLPATPVGKICDNSFTSPKGIPNGFGTTPLTPSARISALNIVGDLLRKVGALESKLAACRNFAKDQASRKSYTPVNLNSNSSSSVLNSSGVKYSHAGHTSFFDKGAVNGYEPPGVLGSRPPSPPGMLPLSV.

The stretch at 19–190 (WRELSKRLKQ…LAVRERQTDG (172 aa)) forms a coiled coil. Basic and acidic residues predominate over residues 182-192 (AVRERQTDGTR). Disordered stretches follow at residues 182–206 (AVRERQTDGTRKSAPSSPTLDCDKT) and 326–345 (PPGVLGSRPPSPPGMLPLSV). Over residues 334-345 (PPSPPGMLPLSV) the composition is skewed to pro residues.

This sequence belongs to the nudE family. In terms of processing, phosphorylated in mitosis.

The protein resides in the cytoplasm. Its subcellular location is the cytoskeleton. The protein localises to the microtubule organizing center. It is found in the centrosome. It localises to the spindle. In terms of biological role, required for organization of the cellular microtubule array and microtubule anchoring at the centrosome. Positively regulates the activity of the minus-end directed microtubule motor protein dynein. May enhance dynein-mediated microtubule sliding by targeting dynein to the microtubule plus end. Positively regulates lysosome peripheral distribution and ruffled border formation in osteoclasts. This is Nuclear distribution protein nudE-like 1-A (ndel1-a) from Xenopus laevis (African clawed frog).